A 251-amino-acid polypeptide reads, in one-letter code: Ubiquinone/menaquinone biosynthesis C-methyltransferase UbiE (251 aa).

Residues threonine 74, aspartate 95, asparagine 123–alanine 124, and serine 140 contribute to the S-adenosyl-L-methionine site.

Belongs to the class I-like SAM-binding methyltransferase superfamily. MenG/UbiE family.

It catalyses the reaction a 2-demethylmenaquinol + S-adenosyl-L-methionine = a menaquinol + S-adenosyl-L-homocysteine + H(+). The enzyme catalyses a 2-methoxy-6-(all-trans-polyprenyl)benzene-1,4-diol + S-adenosyl-L-methionine = a 5-methoxy-2-methyl-3-(all-trans-polyprenyl)benzene-1,4-diol + S-adenosyl-L-homocysteine + H(+). The protein operates within quinol/quinone metabolism; menaquinone biosynthesis; menaquinol from 1,4-dihydroxy-2-naphthoate: step 2/2. Its pathway is cofactor biosynthesis; ubiquinone biosynthesis. Functionally, methyltransferase required for the conversion of demethylmenaquinol (DMKH2) to menaquinol (MKH2) and the conversion of 2-polyprenyl-6-methoxy-1,4-benzoquinol (DDMQH2) to 2-polyprenyl-3-methyl-6-methoxy-1,4-benzoquinol (DMQH2). In Photorhabdus laumondii subsp. laumondii (strain DSM 15139 / CIP 105565 / TT01) (Photorhabdus luminescens subsp. laumondii), this protein is Ubiquinone/menaquinone biosynthesis C-methyltransferase UbiE.